The chain runs to 349 residues: 4-hydroxy-3-methylbut-2-en-1-yl diphosphate synthase (flavodoxin) (349 aa).

[4Fe-4S] cluster-binding residues include Cys264, Cys267, Cys299, and Glu306.

This sequence belongs to the IspG family. [4Fe-4S] cluster serves as cofactor.

It carries out the reaction (2E)-4-hydroxy-3-methylbut-2-enyl diphosphate + oxidized [flavodoxin] + H2O + 2 H(+) = 2-C-methyl-D-erythritol 2,4-cyclic diphosphate + reduced [flavodoxin]. The protein operates within isoprenoid biosynthesis; isopentenyl diphosphate biosynthesis via DXP pathway; isopentenyl diphosphate from 1-deoxy-D-xylulose 5-phosphate: step 5/6. In terms of biological role, converts 2C-methyl-D-erythritol 2,4-cyclodiphosphate (ME-2,4cPP) into 1-hydroxy-2-methyl-2-(E)-butenyl 4-diphosphate. This Clostridium tetani (strain Massachusetts / E88) protein is 4-hydroxy-3-methylbut-2-en-1-yl diphosphate synthase (flavodoxin).